A 559-amino-acid chain; its full sequence is Glucose-6-phosphate isomerase (559 aa).

E352 serves as the catalytic Proton donor. Residues H383 and K511 contribute to the active site.

Belongs to the GPI family.

It is found in the cytoplasm. The enzyme catalyses alpha-D-glucose 6-phosphate = beta-D-fructose 6-phosphate. The protein operates within carbohydrate biosynthesis; gluconeogenesis. It participates in carbohydrate degradation; glycolysis; D-glyceraldehyde 3-phosphate and glycerone phosphate from D-glucose: step 2/4. Catalyzes the reversible isomerization of glucose-6-phosphate to fructose-6-phosphate. The sequence is that of Glucose-6-phosphate isomerase from Chlorobium phaeobacteroides (strain DSM 266 / SMG 266 / 2430).